The following is a 372-amino-acid chain: GTPase Obg (372 aa).

Residues 1–159 (MKFIDEARIE…RMLKLELKVL (159 aa)) form the Obg domain. A disordered region spans residues 128-147 (LHFKSSTNRAPRQKTDGKPG). The region spanning 160–334 (ADVGLLGMPN…LVYAIYDYLA (175 aa)) is the OBG-type G domain. GTP-binding positions include 166–173 (GMPNAGKS), 191–195 (FTTLA), 213–216 (DIPG), 284–287 (NKLD), and 315–317 (SAL). Positions 173 and 193 each coordinate Mg(2+).

It belongs to the TRAFAC class OBG-HflX-like GTPase superfamily. OBG GTPase family. In terms of assembly, monomer. It depends on Mg(2+) as a cofactor.

It is found in the cytoplasm. An essential GTPase which binds GTP, GDP and possibly (p)ppGpp with moderate affinity, with high nucleotide exchange rates and a fairly low GTP hydrolysis rate. Plays a role in control of the cell cycle, stress response, ribosome biogenesis and in those bacteria that undergo differentiation, in morphogenesis control. The polypeptide is GTPase Obg (Burkholderia thailandensis (strain ATCC 700388 / DSM 13276 / CCUG 48851 / CIP 106301 / E264)).